We begin with the raw amino-acid sequence, 177 residues long: Platelet glycoprotein IX (177 aa).

A signal peptide spans 1–16 (MPAWGALFLLWATAEA). The region spanning 17–51 (TKDCPSPCTCRALETMGLWVDCRGHGLTALPALPA) is the LRRNT domain. Over 17 to 147 (TKDCPSPCTC…QLQASWVRPG (131 aa)) the chain is Extracellular. Residue asparagine 60 is glycosylated (N-linked (GlcNAc...) asparagine). One copy of the LRR repeat lies at 60–83 (NNSLQSVPPGAFDHLPQLQTLDVT). An LRRCT domain is found at 85-137 (NPWHCDCSLTYLRLWLEDRTPEALLQVRCASPSLAAHGPLGRLTGYQLGSCGW). The chain crosses the membrane as a helical span at residues 148–168 (VLWDVALVAVAALGLALLAGL). The Cytoplasmic portion of the chain corresponds to 169 to 177 (LCATTEALD).

Two GP-Ib beta are disulfide-linked to one GP-Ib alpha. GP-IX is complexed with the GP-Ib heterodimer via a non covalent linkage.

It is found in the membrane. In terms of biological role, the GPIb-V-IX complex functions as the vWF receptor and mediates vWF-dependent platelet adhesion to blood vessels. The adhesion of platelets to injured vascular surfaces in the arterial circulation is a critical initiating event in hemostasis. GP-IX may provide for membrane insertion and orientation of GP-Ib. This is Platelet glycoprotein IX (GP9) from Homo sapiens (Human).